The sequence spans 386 residues: WD repeat-containing protein 89 (386 aa).

WD repeat units follow at residues 21 to 65 (KEPT…LLRE), 68 to 107 (GSPGLLNGVRFANSCDNVYSASTDGTVKCWDARLASEKPA), 112 to 156 (GYPS…QDLS), 167 to 207 (THSD…EEDA), 213 to 253 (NSVS…TDEP), and 318 to 357 (GHAATVRSFCWTVSEDSLLTGGEDAQLLLWKPGAVEKTFT).

This chain is WD repeat-containing protein 89 (Wdr89), found in Rattus norvegicus (Rat).